Here is a 350-residue protein sequence, read N- to C-terminus: ADP-ribosylhydrolase ARH3 (350 aa).

Mg(2+)-binding residues include glutamate 27, threonine 57, aspartate 58, and aspartate 59. Aspartate 58 is a substrate binding site. Residues 127–133 (KGSYGNG), histidine 163, leucine 216, and isoleucine 252 contribute to the substrate site. Positions 295, 297, and 298 each coordinate Mg(2+).

Belongs to the ADP-ribosylglycohydrolase family. As to quaternary structure, monomer. It depends on Mg(2+) as a cofactor.

Its subcellular location is the nucleus. The protein resides in the cytoplasm. The protein localises to the chromosome. It localises to the mitochondrion matrix. The catalysed reaction is [(1''-&gt;2')-ADP-alpha-D-ribose](n) + H2O = [(1''-&gt;2')-ADP-alpha-D-ribose](n-1) + ADP-D-ribose. The enzyme catalyses 1''-O-acetyl-ADP-alpha-D-ribose + H2O = ADP-D-ribose + acetate + H(+). It catalyses the reaction O-(ADP-D-ribosyl)-L-seryl-[protein] + H2O = ADP-D-ribose + L-seryl-[protein]. It carries out the reaction alpha-NAD(+) + H2O = ADP-D-ribose + nicotinamide + H(+). With respect to regulation, the protein undergoes a dramatic conformational switch from closed to open states upon substrate-binding, which enables specific substrate recognition for the 1''-O-linkage. The glutamate flap (Glu-27) blocks substrate entrance to Mg(2+) in the unliganded closed state. In presence of substrate, Glu-27 is ejected from the active site: this closed-to-open transition significantly widens the substrate-binding channel and precisely positions the scissile 1''-O-linkage for cleavage while securing tightly 2'- and 3'-hydroxyls of ADP-ribose. Its function is as follows. ADP-ribosylhydrolase that preferentially hydrolyzes the scissile alpha-O-linkage attached to the anomeric C1'' position of ADP-ribose and acts on different substrates, such as proteins ADP-ribosylated on serine and threonine, free poly(ADP-ribose) and O-acetyl-ADP-D-ribose. Specifically acts as a serine mono-ADP-ribosylhydrolase by mediating the removal of mono-ADP-ribose attached to serine residues on proteins, thereby playing a key role in DNA damage response. Serine ADP-ribosylation of proteins constitutes the primary form of ADP-ribosylation of proteins in response to DNA damage. Does not hydrolyze ADP-ribosyl-arginine, -cysteine, -diphthamide, or -asparagine bonds. Also able to degrade protein free poly(ADP-ribose), which is synthesized in response to DNA damage: free poly(ADP-ribose) acts as a potent cell death signal and its degradation by ADPRHL2 protects cells from poly(ADP-ribose)-dependent cell death, a process named parthanatos. Also hydrolyzes free poly(ADP-ribose) in mitochondria. Specifically digests O-acetyl-ADP-D-ribose, a product of deacetylation reactions catalyzed by sirtuins. Specifically degrades 1''-O-acetyl-ADP-D-ribose isomer, rather than 2''-O-acetyl-ADP-D-ribose or 3''-O-acetyl-ADP-D-ribose isomers. This Xenopus tropicalis (Western clawed frog) protein is ADP-ribosylhydrolase ARH3 (adprs).